The following is a 397-amino-acid chain: Argininosuccinate synthase (397 aa).

9-17 (AYSGGLDTS) contributes to the ATP binding site. Residue tyrosine 85 coordinates L-citrulline. Glycine 115 serves as a coordination point for ATP. L-aspartate is bound by residues threonine 117, asparagine 121, and aspartate 122. Asparagine 121 is a binding site for L-citrulline. Residues arginine 125, serine 173, glutamate 258, and tyrosine 270 each contribute to the L-citrulline site.

It belongs to the argininosuccinate synthase family. Type 1 subfamily. Homotetramer.

Its subcellular location is the cytoplasm. The enzyme catalyses L-citrulline + L-aspartate + ATP = 2-(N(omega)-L-arginino)succinate + AMP + diphosphate + H(+). It participates in amino-acid biosynthesis; L-arginine biosynthesis; L-arginine from L-ornithine and carbamoyl phosphate: step 2/3. This chain is Argininosuccinate synthase, found in Streptococcus suis (strain 05ZYH33).